A 119-amino-acid chain; its full sequence is Large ribosomal subunit protein bL20 (119 aa).

The protein belongs to the bacterial ribosomal protein bL20 family.

Its function is as follows. Binds directly to 23S ribosomal RNA and is necessary for the in vitro assembly process of the 50S ribosomal subunit. It is not involved in the protein synthesizing functions of that subunit. The polypeptide is Large ribosomal subunit protein bL20 (Halalkalibacterium halodurans (strain ATCC BAA-125 / DSM 18197 / FERM 7344 / JCM 9153 / C-125) (Bacillus halodurans)).